Here is a 140-residue protein sequence, read N- to C-terminus: MRHGIAHRKLNRTHSHRKAMLANMAASLIEHEQIVTTLPKAKELGPFVDKLITLAKRGDVHGRRQAMSKVRNEDQVKKLFDTLGGRYSERDGGYTRVLKAGFRHGDNAPMAVIELVDRDPSAKGAADRARLEEEGGMTEE.

Positions 119-133 (DPSAKGAADRARLEE) are enriched in basic and acidic residues. A disordered region spans residues 119 to 140 (DPSAKGAADRARLEEEGGMTEE).

The protein belongs to the bacterial ribosomal protein bL17 family. In terms of assembly, part of the 50S ribosomal subunit. Contacts protein L32.

The polypeptide is Large ribosomal subunit protein bL17 (Maricaulis maris (strain MCS10) (Caulobacter maris)).